We begin with the raw amino-acid sequence, 277 residues long: Inositol monophosphatase 1 (277 aa).

Residues Glu-70, Asp-90, Ile-92, and Asp-93 each coordinate Mg(2+). Residues Glu-70, 90 to 95, 194 to 196, Glu-213, and Asp-220 contribute to the substrate site; these read DPIDGT and GTA. Residue Asp-220 participates in Mg(2+) binding.

It belongs to the inositol monophosphatase superfamily. As to quaternary structure, homodimer. Mg(2+) serves as cofactor. As to expression, mostly expressed in brain, small intestine, testis, kidney, and spleen (at protein level).

The protein localises to the cytoplasm. The enzyme catalyses a myo-inositol phosphate + H2O = myo-inositol + phosphate. It carries out the reaction 1D-myo-inositol 1-phosphate + H2O = myo-inositol + phosphate. The catalysed reaction is 1D-myo-inositol 2-phosphate + H2O = myo-inositol + phosphate. It catalyses the reaction 1D-myo-inositol 3-phosphate + H2O = myo-inositol + phosphate. The enzyme catalyses 1D-myo-inositol 4-phosphate + H2O = myo-inositol + phosphate. It carries out the reaction 1D-myo-inositol 5-phosphate + H2O = myo-inositol + phosphate. The catalysed reaction is 1D-myo-inositol 6-phosphate + H2O = myo-inositol + phosphate. It catalyses the reaction scyllo-inositol 1-phosphate + H2O = scyllo-inositol + phosphate. The enzyme catalyses alpha-D-galactose 1-phosphate + H2O = D-galactose + phosphate. It carries out the reaction alpha-D-glucose 1-phosphate + H2O = D-glucose + phosphate. The catalysed reaction is D-glucose 6-phosphate + H2O = D-glucose + phosphate. It catalyses the reaction beta-D-fructose 1-phosphate + H2O = D-fructose + phosphate. The enzyme catalyses glycerol 2-phosphate + H2O = glycerol + phosphate. It carries out the reaction adenosine 2'-phosphate + H2O = adenosine + phosphate. Its pathway is polyol metabolism; myo-inositol biosynthesis; myo-inositol from D-glucose 6-phosphate: step 2/2. With respect to regulation, inhibited by Li(+), Ca(2+) and Mn(2+), but also by Mg(2+) at concentrations above 3 mM. In terms of biological role, phosphatase involved in the dephosphorylation of myo-inositol monophosphate to generate myo-inositol. Is also able to dephosphorylate scyllo-inositol-phosphate, myo-inositol 1,4-diphosphate, scyllo-inositol-1,3-diphosphate and scyllo-inositol-1,4-diphosphate. Also dephosphorylates in vitro other sugar-phosphates including D-galactose-1-phosphate, glucose-1-phosphate, glucose-6-phosphate, fructose-1-phosphate, beta-glycerophosphate and 2'-AMP. Responsible for the provision of inositol required for synthesis of phosphatidylinositol and polyphosphoinositides, and involved in maintaining normal brain function. Has been implicated as the pharmacological target for lithium Li(+) action in brain. This chain is Inositol monophosphatase 1 (Impa1), found in Mus musculus (Mouse).